The following is a 534-amino-acid chain: Light-independent protochlorophyllide reductase subunit B (534 aa).

Aspartate 36 serves as a coordination point for [4Fe-4S] cluster. The Proton donor role is filled by aspartate 274. Substrate is bound at residue 409–410 (GL). The tract at residues 426-446 (DEAGPSHHGGKAVPASAPRAD) is disordered.

This sequence belongs to the ChlB/BchB/BchZ family. As to quaternary structure, protochlorophyllide reductase is composed of three subunits; BchL, BchN and BchB. Forms a heterotetramer of two BchB and two BchN subunits. It depends on [4Fe-4S] cluster as a cofactor.

It carries out the reaction chlorophyllide a + oxidized 2[4Fe-4S]-[ferredoxin] + 2 ADP + 2 phosphate = protochlorophyllide a + reduced 2[4Fe-4S]-[ferredoxin] + 2 ATP + 2 H2O. It participates in porphyrin-containing compound metabolism; bacteriochlorophyll biosynthesis (light-independent). In terms of biological role, component of the dark-operative protochlorophyllide reductase (DPOR) that uses Mg-ATP and reduced ferredoxin to reduce ring D of protochlorophyllide (Pchlide) to form chlorophyllide a (Chlide). This reaction is light-independent. The NB-protein (BchN-BchB) is the catalytic component of the complex. The chain is Light-independent protochlorophyllide reductase subunit B from Cereibacter sphaeroides (strain ATCC 17029 / ATH 2.4.9) (Rhodobacter sphaeroides).